The following is a 294-amino-acid chain: DNA replication complex GINS protein SLD5 (294 aa).

It belongs to the GINS4/SLD5 family. Component of the GINS complex which is a heterotetramer composed of SLD5, PSF1, PSF2 and PSF3. Interacts with PSF2.

It is found in the nucleus. Functionally, required for DNA replication. Functions as part of the GINS complex which plays an essential role in the initiation of DNA replication by binding to DNA replication origins and facilitating the assembly of the DNA replication machinery. In Saccharomyces cerevisiae (strain ATCC 204508 / S288c) (Baker's yeast), this protein is DNA replication complex GINS protein SLD5.